The sequence spans 173 residues: ADP-ribosylation factor-like protein 11 (173 aa).

Gly2 carries N-myristoyl glycine lipidation. GTP is bound by residues 17–24 (GLDCAGKT), 61–65 (DIGGQ), and 120–123 (NKQE).

This sequence belongs to the small GTPase superfamily. Arf family.

Its function is as follows. May play a role in apoptosis. May act as a tumor suppressor. The protein is ADP-ribosylation factor-like protein 11 (Arl11) of Rattus norvegicus (Rat).